The sequence spans 337 residues: GTPase Obg (337 aa).

The Obg domain occupies 1–159; it reads MKFVDSATIS…FELEMELKLM (159 aa). An OBG-type G domain is found at 160 to 322; it reads ADVGLVGFPN…LKDELWRQVS (163 aa). GTP is bound by residues 166-173, 191-195, 213-216, 280-283, and 303-305; these read GFPNAGKS, FTTLV, DIPG, TKMD, and SSV. Positions 173 and 193 each coordinate Mg(2+).

It belongs to the TRAFAC class OBG-HflX-like GTPase superfamily. OBG GTPase family. Monomer. Mg(2+) is required as a cofactor.

The protein localises to the cytoplasm. Functionally, an essential GTPase which binds GTP, GDP and possibly (p)ppGpp with moderate affinity, with high nucleotide exchange rates and a fairly low GTP hydrolysis rate. Plays a role in control of the cell cycle, stress response, ribosome biogenesis and in those bacteria that undergo differentiation, in morphogenesis control. The polypeptide is GTPase Obg (Chlorobium phaeobacteroides (strain DSM 266 / SMG 266 / 2430)).